A 429-amino-acid polypeptide reads, in one-letter code: Tyrosine-protein kinase STYK1 (429 aa).

Residues valine 30–tryptophan 50 form a helical membrane-spanning segment. Positions serine 58–glycine 83 are disordered. The Protein kinase domain occupies leucine 119–alanine 390. ATP is bound by residues isoleucine 125–leucine 133 and lysine 152. Aspartate 256 (proton acceptor) is an active-site residue.

It belongs to the protein kinase superfamily. Tyr protein kinase family. As to expression, highly expressed in colon and small intestine. Weakly or not expressed in spleen, skeletal muscle, liver, kidney, heart and brain. Expressed in transformed kidney cell lines (COS-1 and HEK293T).

Its subcellular location is the membrane. It carries out the reaction L-tyrosyl-[protein] + ATP = O-phospho-L-tyrosyl-[protein] + ADP + H(+). Its function is as follows. Probable tyrosine protein-kinase, which has strong transforming capabilities on a variety of cell lines including NIH 3T3 fibroblasts and on athymic nude mice. When overexpressed, it can also induce tumor cell invasion as well as metastasis in distant organs. May act by activating both MAP kinase and phosphatidylinositol 3'-kinases (PI3K) pathways. This is Tyrosine-protein kinase STYK1 (Styk1) from Mus musculus (Mouse).